A 108-amino-acid chain; its full sequence is ATPase inhibitor, mitochondrial (108 aa).

Residues 1-25 constitute a mitochondrion transit peptide; it reads MAATALAVRSRIGAWSVWAMQSRGF. Residues 25-48 are disordered; the sequence is FSSDTPEGVRSGAGAVRDAGGAFG. The N-terminal inhibitory region stretch occupies residues 26-52; the sequence is SSDTPEGVRSGAGAVRDAGGAFGKKEQ. A coiled-coil region spans residues 69-108; sequence ALKKHHENEISHHVKEIERLQKEIERHKQSIKKLKNDDDD. Residues 74–106 are antiparallel alpha-helical coiled coil region; the sequence is HENEISHHVKEIERLQKEIERHKQSIKKLKNDD. K103 is modified (N6-succinyllysine).

Belongs to the ATPase inhibitor family. Homodimer; represents the active form and is present at a pH value below 6.5. Homotetramer; represents the inactive form and is present at a pH value above 7.0.

The protein resides in the mitochondrion. Functionally, endogenous F(1)F(o)-ATPase inhibitor limiting ATP depletion when the mitochondrial membrane potential falls below a threshold and the F(1)F(o)-ATP synthase starts hydrolyzing ATP to pump protons out of the mitochondrial matrix. Required to avoid the consumption of cellular ATP when the F(1)F(o)-ATP synthase enzyme acts as an ATP hydrolase. Indirectly acts as a regulator of heme synthesis in erythroid tissues: regulates heme synthesis by modulating the mitochondrial pH and redox potential, allowing FECH to efficiently catalyze the incorporation of iron into protoporphyrin IX to produce heme. In Sus scrofa (Pig), this protein is ATPase inhibitor, mitochondrial.